The sequence spans 275 residues: Dermonecrotic toxin SpeSicTox-betaIIA2iii (275 aa).

Histidine 5 is an active-site residue. Mg(2+) is bound by residues glutamate 25 and aspartate 27. Histidine 41 serves as the catalytic Nucleophile. Disulfide bonds link cysteine 45-cysteine 51 and cysteine 47-cysteine 190. Residue aspartate 85 coordinates Mg(2+).

This sequence belongs to the arthropod phospholipase D family. Class II subfamily. Requires Mg(2+) as cofactor. As to expression, expressed by the venom gland.

Its subcellular location is the secreted. It catalyses the reaction an N-(acyl)-sphingosylphosphocholine = an N-(acyl)-sphingosyl-1,3-cyclic phosphate + choline. The enzyme catalyses an N-(acyl)-sphingosylphosphoethanolamine = an N-(acyl)-sphingosyl-1,3-cyclic phosphate + ethanolamine. The catalysed reaction is a 1-acyl-sn-glycero-3-phosphocholine = a 1-acyl-sn-glycero-2,3-cyclic phosphate + choline. It carries out the reaction a 1-acyl-sn-glycero-3-phosphoethanolamine = a 1-acyl-sn-glycero-2,3-cyclic phosphate + ethanolamine. Functionally, dermonecrotic toxins cleave the phosphodiester linkage between the phosphate and headgroup of certain phospholipids (sphingolipid and lysolipid substrates), forming an alcohol (often choline) and a cyclic phosphate. This toxin acts on sphingomyelin (SM). It may also act on ceramide phosphoethanolamine (CPE), lysophosphatidylcholine (LPC) and lysophosphatidylethanolamine (LPE), but not on lysophosphatidylserine (LPS), and lysophosphatidylglycerol (LPG). It acts by transphosphatidylation, releasing exclusively cyclic phosphate products as second products. Induces dermonecrosis, hemolysis, increased vascular permeability, edema, inflammatory response, and platelet aggregation. The chain is Dermonecrotic toxin SpeSicTox-betaIIA2iii from Sicarius peruensis (Six-eyed sand spider).